A 423-amino-acid polypeptide reads, in one-letter code: UDP-N-acetylglucosamine 1-carboxyvinyltransferase 2 (423 aa).

Residue 23–24 participates in phosphoenolpyruvate binding; the sequence is KN. Arginine 93 contributes to the UDP-N-acetyl-alpha-D-glucosamine binding site. Residue cysteine 117 is the Proton donor of the active site. A 2-(S-cysteinyl)pyruvic acid O-phosphothioketal modification is found at cysteine 117. UDP-N-acetyl-alpha-D-glucosamine contacts are provided by residues 122–126, aspartate 305, and isoleucine 327; that span reads RPIDQ.

It belongs to the EPSP synthase family. MurA subfamily.

It is found in the cytoplasm. It catalyses the reaction phosphoenolpyruvate + UDP-N-acetyl-alpha-D-glucosamine = UDP-N-acetyl-3-O-(1-carboxyvinyl)-alpha-D-glucosamine + phosphate. It participates in cell wall biogenesis; peptidoglycan biosynthesis. In terms of biological role, cell wall formation. Adds enolpyruvyl to UDP-N-acetylglucosamine. In Listeria monocytogenes serovar 1/2a (strain ATCC BAA-679 / EGD-e), this protein is UDP-N-acetylglucosamine 1-carboxyvinyltransferase 2.